Here is a 190-residue protein sequence, read N- to C-terminus: CASP-like protein 1E2 (190 aa).

A disordered region spans residues 1-21; it reads MEHEGKNNMNGMEMEKGKREL. The Cytoplasmic portion of the chain corresponds to 1–28; sequence MEHEGKNNMNGMEMEKGKRELGSRKGVE. A helical membrane pass occupies residues 29–49; sequence LTMRVLALILTMAAATVLGVA. The Extracellular portion of the chain corresponds to 50 to 83; it reads KQTKVVSIKLIPTLPPLDITTTAKASYLSAFVYN. The chain crosses the membrane as a helical span at residues 84 to 104; sequence ISVNAIACGYTAISIAILMIS. Residues 105 to 111 are Cytoplasmic-facing; it reads RGRRSKK. The helical transmembrane segment at 112-132 threads the bilayer; sequence LLMVVLLGDLVMVALLFSGTG. Residues 133 to 163 are Extracellular-facing; the sequence is AASAIGLMGLHGNKHVMWKKVCGVFGKFCHR. A helical membrane pass occupies residues 164 to 184; that stretch reads AAPSLPLTLLAAVVFMFLVVL. Topologically, residues 185–190 are cytoplasmic; it reads DAIKLP.

Belongs to the Casparian strip membrane proteins (CASP) family. As to quaternary structure, homodimer and heterodimers.

Its subcellular location is the cell membrane. This Arabidopsis thaliana (Mouse-ear cress) protein is CASP-like protein 1E2.